Reading from the N-terminus, the 335-residue chain is F420-dependent glucose-6-phosphate dehydrogenase 1 (335 aa).

Residue D38 participates in coenzyme F420-(gamma-Glu)n binding. H39 serves as the catalytic Proton donor. Coenzyme F420-(gamma-Glu)n contacts are provided by residues T75 and 106-107 (TG). E108 functions as the Proton acceptor in the catalytic mechanism. Residues N111, 176 to 177 (GG), and 179 to 180 (VV) each bind coenzyme F420-(gamma-Glu)n. Residues T194, K197, K258, and R282 each contribute to the substrate site.

It belongs to the F420-dependent glucose-6-phosphate dehydrogenase family. Homodimer.

It carries out the reaction oxidized coenzyme F420-(gamma-L-Glu)(n) + D-glucose 6-phosphate + H(+) = 6-phospho-D-glucono-1,5-lactone + reduced coenzyme F420-(gamma-L-Glu)(n). Its function is as follows. Catalyzes the coenzyme F420-dependent oxidation of glucose 6-phosphate (G6P) to 6-phosphogluconolactone. This chain is F420-dependent glucose-6-phosphate dehydrogenase 1, found in Rhodococcus jostii (strain RHA1).